A 416-amino-acid chain; its full sequence is Formyl-CoA:oxalate CoA-transferase (416 aa).

CoA is bound by residues 17–18 (QS), Arg38, 72–75 (LNTK), 96–98 (NFH), His104, and 137–140 (KAYE). The active-site Nucleophile is Asp169. Residue 248–250 (GGQ) participates in substrate binding. Residue 273–275 (QEQ) coordinates CoA.

This sequence belongs to the CoA-transferase III family. Frc subfamily. Homodimer.

The catalysed reaction is formyl-CoA + oxalate = oxalyl-CoA + formate. The protein operates within metabolic intermediate degradation; oxalate degradation; CO(2) and formate from oxalate: step 1/2. In terms of biological role, involved in the catabolism of oxalate and in the adapatation to low pH via the induction of the oxalate-dependent acid tolerance response (ATR). Catalyzes the transfer of the CoA moiety from formyl-CoA to oxalate. The chain is Formyl-CoA:oxalate CoA-transferase from Escherichia coli O81 (strain ED1a).